Consider the following 1227-residue polypeptide: Methionine synthase (1227 aa).

The Hcy-binding domain maps to S2–V325. Positions 247, 310, and 311 each coordinate Zn(2+). Residues F356–E617 enclose the Pterin-binding domain. The B12-binding N-terminal domain occupies Q650–S744. Methylcob(III)alamin contacts are provided by residues E694, G756–D760, H759, S804, T808, and A860. One can recognise a B12-binding domain in the interval N746–A881. Residues K897–D1227 form the AdoMet activation domain. S-adenosyl-L-methionine is bound by residues D946, R1134, and Y1189–F1190.

Belongs to the vitamin-B12 dependent methionine synthase family. It depends on methylcob(III)alamin as a cofactor. Requires Zn(2+) as cofactor.

It carries out the reaction (6S)-5-methyl-5,6,7,8-tetrahydrofolate + L-homocysteine = (6S)-5,6,7,8-tetrahydrofolate + L-methionine. It participates in amino-acid biosynthesis; L-methionine biosynthesis via de novo pathway; L-methionine from L-homocysteine (MetH route): step 1/1. Functionally, catalyzes the transfer of a methyl group from methyl-cobalamin to homocysteine, yielding enzyme-bound cob(I)alamin and methionine. Subsequently, remethylates the cofactor using methyltetrahydrofolate. This Salmonella typhimurium (strain LT2 / SGSC1412 / ATCC 700720) protein is Methionine synthase (metH).